Here is a 139-residue protein sequence, read N- to C-terminus: Protein cornichon homolog 4 (139 aa).

Transmembrane regions (helical) follow at residues 5–25 (VFVF…YFII), 57–77 (LVTV…NLPV), and 118–138 (LGFH…ALIN).

This sequence belongs to the cornichon family. Interacts with Sec23/24 complex components SEC24B and SEC24D. Interacts with CCR5. Interacts with ADRB2 in the early secretory pathway.

The protein localises to the membrane. Its subcellular location is the endoplasmic reticulum. It is found in the endoplasmic reticulum-Golgi intermediate compartment. Its function is as follows. Involved in G protein-coupled receptors (GPCRs) trafficking from the endoplasmic reticulum to the cell surface; it promotes the exit of GPCRs from the early secretory pathway, likely through interaction with the COPII machinery. This chain is Protein cornichon homolog 4 (CNIH4), found in Bos taurus (Bovine).